The chain runs to 218 residues: Tubulin polymerization-promoting protein (218 aa).

The disordered stretch occupies residues 1 to 46; the sequence is MADSKAKPAKAANKTPPKSPGDPARAAKRLSLESEGANEGATAAPE. The interval 1–115 is mediates interaction with LIMK1; sequence MADSKAKPAK…SCRTITFEQF (115 aa). A Phosphothreonine modification is found at Thr15. A phosphoserine mark is found at Ser19, Ser31, and Ser34. Thr42 carries the phosphothreonine modification. Zn(2+) is bound by residues His60, His71, Cys79, and Cys82. Thr91 bears the Phosphothreonine mark. Phosphoserine is present on Ser106. An O-linked (GlcNAc) serine glycan is attached at Ser151. A phosphoserine mark is found at Ser158 and Ser159. A disordered region spans residues 166–192; sequence TDTSKFTGSHKERFDQSGKGKGKAGRV. Basic and acidic residues predominate over residues 174-183; that stretch reads SHKERFDQSG.

It belongs to the TPPP family. Homodimer. Binds tubulin; binding is inhibited by GTP. Interacts with MAPK1. Interacts with GAPDH; the interaction is direct. Interacts with LIMK1 (via the PDZ domain); the interaction is direct. Interacts with LIMK2. Interacts with HDAC6; thereby inhibiting the tubulin deacetylase activity of HDAC6. Interacts with aggregated SNCA; may have a pro-aggregatory role in synucleinopathies. Interacts with DYNLL1. Interacts (via C-terminus) with S100A2, S100A6 and S100B; these interactions inhibit TPPP dimerization. It depends on Mg(2+) as a cofactor. Post-translationally, phosphorylated by LIMK1 on serine residues; phosphorylation may alter the tubulin polymerization activity. Phosphorylation by LIMK2, but not LIMK1, regulates astral microtubule organization at early stage of mitosis. Phosphorylation by ROCK1 at Ser-31, Ser-106 and Ser-158 inhibits interaction with HDAC6, resulting in decreased acetylation of tubulin, increased cell motility and entry into S-phase. Phosphorylation by CDK1 inhibits the microtubule polymerizing activity. In terms of processing, degraded by the proteasome; zinc-binding inhibits degradation by the proteasome. As to expression, widely expressed with higher expression in brain (at protein level).

It localises to the golgi outpost. The protein resides in the cytoplasm. The protein localises to the cytoskeleton. It is found in the microtubule organizing center. Its subcellular location is the nucleus. It localises to the spindle. It catalyses the reaction GTP + H2O = GDP + phosphate + H(+). Functionally, regulator of microtubule dynamics that plays a key role in myelination by promoting elongation of the myelin sheath. Acts as a microtubule nucleation factor in oligodendrocytes: specifically localizes to the postsynaptic Golgi apparatus region, also named Golgi outpost, and promotes microtubule nucleation, an important step for elongation of the myelin sheath. Required for both uniform polarized growth of distal microtubules as well as directing the branching of proximal processes. Shows magnesium-dependent GTPase activity; the role of the GTPase activity is unclear. In addition to microtubule nucleation activity, also involved in microtubule bundling and stabilization of existing microtubules, thereby maintaining the integrity of the microtubule network. Regulates microtubule dynamics by promoting tubulin acetylation: acts by inhibiting the tubulin deacetylase activity of HDAC6. Also regulates cell migration: phosphorylation by ROCK1 inhibits interaction with HDAC6, resulting in decreased acetylation of tubulin and increased cell motility. Plays a role in cell proliferation by regulating the G1/S-phase transition. Involved in astral microtubule organization and mitotic spindle orientation during early stage of mitosis; this process is regulated by phosphorylation by LIMK2. The protein is Tubulin polymerization-promoting protein of Mus musculus (Mouse).